Here is a 357-residue protein sequence, read N- to C-terminus: Peptide chain release factor 1 (357 aa).

Position 232 is an N5-methylglutamine (Gln-232). Over residues 284–304 the composition is skewed to basic and acidic residues; the sequence is AERAAERKGQIGSGDRSERIR. A disordered region spans residues 284 to 308; the sequence is AERAAERKGQIGSGDRSERIRTYNY.

This sequence belongs to the prokaryotic/mitochondrial release factor family. Post-translationally, methylated by PrmC. Methylation increases the termination efficiency of RF1.

The protein localises to the cytoplasm. In terms of biological role, peptide chain release factor 1 directs the termination of translation in response to the peptide chain termination codons UAG and UAA. In Maricaulis maris (strain MCS10) (Caulobacter maris), this protein is Peptide chain release factor 1.